Reading from the N-terminus, the 842-residue chain is GPI ethanolamine phosphate transferase 2 (842 aa).

Asparagine 186 carries N-linked (GlcNAc...) asparagine glycosylation. Residues 409–429 (YNYPLLFIGCFLSIVITGTIY) traverse the membrane as a helical segment. A glycan (N-linked (GlcNAc...) asparagine) is linked at asparagine 441. 2 helical membrane passes run 442–462 (TSIL…SSFI) and 468–488 (FWWW…NFSS). A glycan (N-linked (GlcNAc...) asparagine) is linked at asparagine 506. Residues 524-544 (GNIDALWWLNLITVTVVGLNL) form a helical membrane-spanning segment. Asparagine 551 carries an N-linked (GlcNAc...) asparagine glycan. A helical membrane pass occupies residues 554–574 (VSLLGFSDLLSMGLLSMITFL). Residue asparagine 578 is glycosylated (N-linked (GlcNAc...) asparagine). A run of 3 helical transmembrane segments spans residues 615–635 (IHTA…AVLV), 698–718 (YLLA…QSGG), and 740–760 (IYVV…YWSF). The N-linked (GlcNAc...) asparagine glycan is linked to asparagine 771. 2 helical membrane-spanning segments follow: residues 783–803 (YPFI…CIIL) and 821–841 (MVWT…LLLL).

This sequence belongs to the PIGG/PIGN/PIGO family. PIGG subfamily.

It is found in the endoplasmic reticulum membrane. The protein operates within glycolipid biosynthesis; glycosylphosphatidylinositol-anchor biosynthesis. Its function is as follows. Ethanolamine phosphate transferase involved in glycosylphosphatidylinositol-anchor biosynthesis. Transfers ethanolamine phosphate to the GPI second mannose. In Candida glabrata (strain ATCC 2001 / BCRC 20586 / JCM 3761 / NBRC 0622 / NRRL Y-65 / CBS 138) (Yeast), this protein is GPI ethanolamine phosphate transferase 2 (LAS21).